The following is a 122-amino-acid chain: Small ribosomal subunit protein uS13 (122 aa).

The interval 95–122 (GLPVRGQRTHTNARTRKGPAKPIAGKKK) is disordered.

Belongs to the universal ribosomal protein uS13 family. In terms of assembly, part of the 30S ribosomal subunit. Forms a loose heterodimer with protein S19. Forms two bridges to the 50S subunit in the 70S ribosome.

Located at the top of the head of the 30S subunit, it contacts several helices of the 16S rRNA. In the 70S ribosome it contacts the 23S rRNA (bridge B1a) and protein L5 of the 50S subunit (bridge B1b), connecting the 2 subunits; these bridges are implicated in subunit movement. Contacts the tRNAs in the A and P-sites. The protein is Small ribosomal subunit protein uS13 of Xanthobacter autotrophicus (strain ATCC BAA-1158 / Py2).